The chain runs to 260 residues: Segregation and condensation protein A (260 aa).

This sequence belongs to the ScpA family. In terms of assembly, component of a cohesin-like complex composed of ScpA, ScpB and the Smc homodimer, in which ScpA and ScpB bind to the head domain of Smc. The presence of the three proteins is required for the association of the complex with DNA.

It is found in the cytoplasm. Functionally, participates in chromosomal partition during cell division. May act via the formation of a condensin-like complex containing Smc and ScpB that pull DNA away from mid-cell into both cell halves. The sequence is that of Segregation and condensation protein A from Halalkalibacterium halodurans (strain ATCC BAA-125 / DSM 18197 / FERM 7344 / JCM 9153 / C-125) (Bacillus halodurans).